The primary structure comprises 211 residues: Putative hydrolase SMU_367 (211 aa).

Positions 1–29 (MKKQFLEKAVFTVAATAATVVLGNKMADA) are cleaved as a signal peptide. Positions 30-74 (DTYTLQEGDSFFSVAQRYHMDAYELASMNGKDITSLILPGQTLTV) constitute a LysM domain. Residues 77 to 101 (SAAPDNQAAAPTDTTQATTETNDAN) form a disordered region. Low complexity predominate over residues 78-101 (AAPDNQAAAPTDTTQATTETNDAN). Residues 85–209 (AAPTDTTQAT…GTPGSVSYIY (125 aa)) enclose the Peptidase C51 domain.

The chain is Putative hydrolase SMU_367 from Streptococcus mutans serotype c (strain ATCC 700610 / UA159).